Here is a 301-residue protein sequence, read N- to C-terminus: Mitochondrial carnitine/acylcarnitine carrier protein (301 aa).

A2 is modified (N-acetylalanine). Over 2 to 12 (ADEPKPISPFK) the chain is Cytoplasmic. Solcar repeat units lie at residues 8 to 99 (ISPF…GKKL), 108 to 196 (LSYP…LKNL), and 207 to 293 (LSVP…AMKF). Residues 13-31 (NLLAGGFGGMCLVFVGHPL) traverse the membrane as a helical segment. The Mitochondrial matrix segment spans residues 32 to 73 (DTVKVRLQTQPPSLSGQPPMYSGTLDCFRKTLMREGITGLYR). A helical membrane pass occupies residues 74–93 (GMAAPIIGVTPMFAVCFFGF). Residues 94 to 112 (GLGKKLQQKSPEDELSYPQ) are Cytoplasmic-facing. A helical membrane pass occupies residues 113 to 131 (LFTAGMLSGVFTTGIMTPG). At 132–170 (ERIKCLLQIQASSGENKYSGTLDCAKKLYQEFGIRGFYK) the chain is on the mitochondrial matrix side. An N6-acetyllysine mark is found at K148 and K157. At K170 the chain carries N6-acetyllysine; alternate. An N6-succinyllysine; alternate modification is found at K170. Residues 171 to 190 (GTVLTLMRDVPASGMYFMTY) form a helical membrane-spanning segment. At 191 to 211 (EWLKNLFTPEGKSVSDLSVPR) the chain is on the cytoplasmic side. The helical transmembrane segment at 212–230 (ILVAGGFAGIFNWAVAIPP) threads the bilayer. At 231-267 (DVLKSRFQTAPPGKYPNGFRDVLRELIREEGVTSLYK) the chain is on the mitochondrial matrix side. Residues 268-287 (GFNAVMIRAFPANAACFLGF) traverse the membrane as a helical segment. The Cytoplasmic segment spans residues 288-301 (EIAMKFLNWIAPNL).

It belongs to the mitochondrial carrier (TC 2.A.29) family. As to expression, widely expressed, with highest levels in the liver, intermediate levels in heart, testis and kidney and low levels in brain, including cortex, cerebellum, hippocampus and hypothalamus.

The protein resides in the mitochondrion inner membrane. It catalyses the reaction O-acetyl-(R)-carnitine(in) + (R)-carnitine(out) = O-acetyl-(R)-carnitine(out) + (R)-carnitine(in). The enzyme catalyses an O-acyl-(R)-carnitine(in) + (R)-carnitine(out) = an O-acyl-(R)-carnitine(out) + (R)-carnitine(in). It carries out the reaction O-propanoyl-(R)-carnitine(in) + (R)-carnitine(out) = O-propanoyl-(R)-carnitine(out) + (R)-carnitine(in). The catalysed reaction is O-hexadecanoyl-(R)-carnitine(in) + (R)-carnitine(out) = O-hexadecanoyl-(R)-carnitine(out) + (R)-carnitine(in). It catalyses the reaction O-octanoyl-(R)-carnitine(in) + (R)-carnitine(out) = O-octanoyl-(R)-carnitine(out) + (R)-carnitine(in). The enzyme catalyses (R)-carnitine(in) = (R)-carnitine(out). In terms of biological role, mediates the electroneutral exchange of acylcarnitines (O-acyl-(R)-carnitine or L-acylcarnitine) of different acyl chain lengths (ranging from O-acetyl-(R)-carnitine to long-chain O-acyl-(R)-carnitines) with free carnitine ((R)-carnitine or L-carnitine) across the mitochondrial inner membrane, via a ping-pong mechanism. Key player in the mitochondrial oxidation pathway, it translocates the fatty acids in the form of acylcarnitines into the mitochondrial matrix, where the carnitine palmitoyltransferase 2 (CPT-2) activates them to undergo fatty acid beta-oxidation. Catalyzes the unidirectional transport (uniport) of carnitine at lower rates than the antiport (exchange). This chain is Mitochondrial carnitine/acylcarnitine carrier protein, found in Mus musculus (Mouse).